Reading from the N-terminus, the 233-residue chain is Large ribosomal subunit protein uL1 (233 aa).

This sequence belongs to the universal ribosomal protein uL1 family. As to quaternary structure, part of the 50S ribosomal subunit.

In terms of biological role, binds directly to 23S rRNA. The L1 stalk is quite mobile in the ribosome, and is involved in E site tRNA release. Functionally, protein L1 is also a translational repressor protein, it controls the translation of the L11 operon by binding to its mRNA. This chain is Large ribosomal subunit protein uL1, found in Proteus mirabilis (strain HI4320).